The sequence spans 280 residues: uncharacterized protein (280 aa).

Composition is skewed to basic and acidic residues over residues 110-122 (EKQAHDDHPERLQ), 167-177 (ATGEERAECGR), 223-261 (ARQHDQRGDRRKGEGDRQKHGDRRGRPDARKNADQRPQQ), and 269-280 (DVDRSKSCLEAE). 3 disordered regions span residues 110–137 (EKQAHDDHPERLQNRSVRQRNGDKKTEH), 151–177 (HRGERRSGNCQQQGRHATGEERAECGR), and 219–280 (TIID…LEAE).

This is an uncharacterized protein from Agrobacterium vitis (Rhizobium vitis).